Here is a 549-residue protein sequence, read N- to C-terminus: MLNQKLNPTPSEDLTIDVDLLYETDPCELKLDEMIEAEPEPEMIEGLPASDALTPADRYLELFEHVQSTKLFPDSKTFPDCAPKMDPLDILIRYRKVRRHRDFDLRRFVENHFWLPETLSSEYVSNPENSLKEHIDQLWPILTREPQDHIPWSSLLALPQSYIVPGGRFSETYYWDSYFTMLGLAESGREDLLKCMADNFAWMIENYGHIPNGNRTYYLSRSQPPVFALMVELFEEDGVRGARRYLDHLKMEYAFWMDGAESLALNQAYRHVVRMPDGSLLNRYWDDRDTPRDESWLEDVETAKHSGRPPNEVYRDLRAGAASGWDYSSRWLRDAGRLASIRTTQFIPIDLNAFLYKLESAIANISALKGERDTEALFRQKASDRRAAVNHYLWDDENGCYRDYDWRREEMALFSAASIVPLYVGMANHEQADRLANVVRSRLLTPGGIMATEYETGEQWDKPNGWAPLQWMAIQGFKLYGDDMLGDEIAHNWLKTVNHFYQEHHKLIEKYHISGGTPREGGGGEYPLQDGFGWTNGVVRRLIGLYGEP.

Residues R168, 175–176 (WD), N212, 221–223 (RSQ), 292–294 (RDE), and G324 contribute to the substrate site. Active-site proton donor/acceptor residues include D326 and E509. E525 serves as a coordination point for substrate.

It belongs to the glycosyl hydrolase 37 family. Monomer.

It is found in the cytoplasm. It catalyses the reaction alpha,alpha-trehalose + H2O = alpha-D-glucose + beta-D-glucose. The protein operates within glycan degradation; trehalose degradation; D-glucose from alpha,alpha-trehalose: step 1/1. Its function is as follows. Hydrolyzes trehalose to glucose. Could be involved, in cells returning to low osmolarity conditions, in the utilization of the accumulated cytoplasmic trehalose, which was synthesized in response to high osmolarity. The sequence is that of Cytoplasmic trehalase from Salmonella schwarzengrund (strain CVM19633).